The sequence spans 142 residues: UPF0102 protein Bcep1808_0248 (142 aa).

This sequence belongs to the UPF0102 family.

The chain is UPF0102 protein Bcep1808_0248 from Burkholderia vietnamiensis (strain G4 / LMG 22486) (Burkholderia cepacia (strain R1808)).